The primary structure comprises 620 residues: 1-deoxy-D-xylulose-5-phosphate synthase (620 aa).

Thiamine diphosphate contacts are provided by residues histidine 75 and 116-118 (AHS). Aspartate 147 is a binding site for Mg(2+). Thiamine diphosphate contacts are provided by residues 148–149 (GA), asparagine 177, tyrosine 284, and glutamate 366. Asparagine 177 lines the Mg(2+) pocket.

Belongs to the transketolase family. DXPS subfamily. In terms of assembly, homodimer. Requires Mg(2+) as cofactor. It depends on thiamine diphosphate as a cofactor.

It catalyses the reaction D-glyceraldehyde 3-phosphate + pyruvate + H(+) = 1-deoxy-D-xylulose 5-phosphate + CO2. The protein operates within metabolic intermediate biosynthesis; 1-deoxy-D-xylulose 5-phosphate biosynthesis; 1-deoxy-D-xylulose 5-phosphate from D-glyceraldehyde 3-phosphate and pyruvate: step 1/1. Its function is as follows. Catalyzes the acyloin condensation reaction between C atoms 2 and 3 of pyruvate and glyceraldehyde 3-phosphate to yield 1-deoxy-D-xylulose-5-phosphate (DXP). The chain is 1-deoxy-D-xylulose-5-phosphate synthase from Bordetella pertussis (strain Tohama I / ATCC BAA-589 / NCTC 13251).